The chain runs to 689 residues: Glycine--tRNA ligase beta subunit (689 aa).

The protein belongs to the class-II aminoacyl-tRNA synthetase family. Tetramer of two alpha and two beta subunits.

The protein localises to the cytoplasm. The catalysed reaction is tRNA(Gly) + glycine + ATP = glycyl-tRNA(Gly) + AMP + diphosphate. This Klebsiella pneumoniae (strain 342) protein is Glycine--tRNA ligase beta subunit.